A 736-amino-acid polypeptide reads, in one-letter code: Gephyrin (736 aa).

The interval 14 to 153 (QIRVGVLTVS…LPGSKKGSQE (140 aa)) is MPT Mo-transferase. 2 disordered regions span residues 181 to 232 (DELE…DSSS) and 260 to 290 (TASL…PKVQ). Residues 187–199 (PSPPPPLSPPPTT) are compositionally biased toward pro residues. Residues 261–290 (ASLSTTPSESPRAQATSRLSTASCPTPKVQ) show a composition bias toward polar residues. The segment at 294–736 (SSKENILRAS…VVDVMVIGRL (443 aa)) is MPT adenylyltransferase.

It in the N-terminal section; belongs to the MoaB/Mog family. The protein in the C-terminal section; belongs to the MoeA family. In terms of assembly, homotrimer, homodimer and homooligomer. Interacts with glycine receptors. Requires Mg(2+) as cofactor.

It is found in the postsynaptic cell membrane. Its subcellular location is the cell membrane. The protein resides in the cytoplasm. The protein localises to the cytosol. It localises to the cytoskeleton. It is found in the cell projection. Its subcellular location is the dendrite. The protein resides in the postsynaptic density. The catalysed reaction is molybdopterin + ATP + H(+) = adenylyl-molybdopterin + diphosphate. The enzyme catalyses adenylyl-molybdopterin + molybdate = Mo-molybdopterin + AMP + H(+). Its pathway is cofactor biosynthesis; molybdopterin biosynthesis. Functionally, microtubule-associated protein involved in membrane protein-cytoskeleton interactions. It is thought to anchor the inhibitory glycine receptor (GLYR) to subsynaptic microtubules. Acts as a major instructive molecule at inhibitory synapses, where it also clusters GABA type A receptors. In terms of biological role, also has a catalytic activity and catalyzes two steps in the biosynthesis of the molybdenum cofactor. In the first step, molybdopterin is adenylated. Subsequently, molybdate is inserted into adenylated molybdopterin and AMP is released. This Gallus gallus (Chicken) protein is Gephyrin (GPHN).